The sequence spans 335 residues: Hsp90 co-chaperone Cdc37-like 1 (335 aa).

A compositionally biased stretch (pro residues) spans 1 to 11 (MEQPWPPPGPW). The disordered stretch occupies residues 1–42 (MEQPWPPPGPWSFPRTGGETEEESDLDVSPSSSHYSPVPDGG). The segment at 2–170 (EQPWPPPGPW…YEQKIRHFGM (169 aa)) is self-association. The segment covering 27–40 (DVSPSSSHYSPVPD) has biased composition (low complexity). A phosphoserine mark is found at S32 and S88. Residues 84 to 120 (HNSESLDQEHAKAQTAVSELRQREEEWRQKEEALVQR) are a coiled coil. The interval 147–276 (KTEDEDKSQS…ARVRLYAQSQ (130 aa)) is self-association and interaction with Hsp90. Residues 266–335 (KARVRLYAQS…EDDDRMMDTV (70 aa)) are interaction with Hsp70. The segment at 277–335 (SFAPVTVENHAPHSGVGCIGSAEPLPQNPDSLQCCPPAPLCSVDSVVHKEDDDRMMDTV) is required for interaction with STIP1.

Belongs to the CDC37 family. In terms of assembly, self-associates. Forms complexes with Hsp70 and Hsp90. Interacts with CDC37, FKBP4, PPID and STIP1.

The protein localises to the cytoplasm. Functionally, co-chaperone that binds to numerous proteins and promotes their interaction with Hsp70 and Hsp90. The chain is Hsp90 co-chaperone Cdc37-like 1 (Cdc37l1) from Rattus norvegicus (Rat).